The chain runs to 317 residues: Probable RuBisCO transcriptional regulator (317 aa).

Residues 6–63 enclose the HTH lysR-type domain; the sequence is FTLDQLRILRAILIQGSFKKAATSLYISQPAVSSHVHNIEKQLNIQLFDRSHRNAQLT. The H-T-H motif DNA-binding region spans 23 to 42; that stretch reads FKKAATSLYISQPAVSSHVH.

Belongs to the LysR transcriptional regulatory family.

The protein localises to the plastid. It is found in the chloroplast. Trans-acting transcriptional regulator of RuBisCO genes (rbcL and rbcS) expression. This is Probable RuBisCO transcriptional regulator (rbcR) from Cyanidium caldarium (Red alga).